Here is a 304-residue protein sequence, read N- to C-terminus: Acetyl-coenzyme A carboxylase carboxyl transferase subunit beta (304 aa).

Residues 16-42 (SSLPPKNSEGGLAYFDEPSPEQESTRK) are disordered. The 257-residue stretch at 48 to 304 (LWVKCPKCGE…LLRYHQEGAV (257 aa)) folds into the CoA carboxyltransferase N-terminal domain. Zn(2+) is bound by residues Cys52, Cys55, Cys71, and Cys74. A C4-type zinc finger spans residues 52–74 (CPKCGEALFNKDLVENQRVCLTC).

Belongs to the AccD/PCCB family. As to quaternary structure, acetyl-CoA carboxylase is a heterohexamer composed of biotin carboxyl carrier protein (AccB), biotin carboxylase (AccC) and two subunits each of ACCase subunit alpha (AccA) and ACCase subunit beta (AccD). Zn(2+) serves as cofactor.

The protein localises to the cytoplasm. It catalyses the reaction N(6)-carboxybiotinyl-L-lysyl-[protein] + acetyl-CoA = N(6)-biotinyl-L-lysyl-[protein] + malonyl-CoA. It participates in lipid metabolism; malonyl-CoA biosynthesis; malonyl-CoA from acetyl-CoA: step 1/1. Functionally, component of the acetyl coenzyme A carboxylase (ACC) complex. Biotin carboxylase (BC) catalyzes the carboxylation of biotin on its carrier protein (BCCP) and then the CO(2) group is transferred by the transcarboxylase to acetyl-CoA to form malonyl-CoA. In Desulfitobacterium hafniense (strain Y51), this protein is Acetyl-coenzyme A carboxylase carboxyl transferase subunit beta.